We begin with the raw amino-acid sequence, 632 residues long: Chaperone protein HtpG (632 aa).

Residues 1-345 (MTTAAHAETL…SKDLSLNVSR (345 aa)) form an a; substrate-binding region. The segment at 346–561 (ELLQKDPQVD…EHDMGYQMRR (216 aa)) is b. The tract at residues 562–632 (LMEAAGQPLP…VQRLNKLLSH (71 aa)) is c.

This sequence belongs to the heat shock protein 90 family. Homodimer.

It is found in the cytoplasm. Its function is as follows. Molecular chaperone. Has ATPase activity. The sequence is that of Chaperone protein HtpG from Chromohalobacter salexigens (strain ATCC BAA-138 / DSM 3043 / CIP 106854 / NCIMB 13768 / 1H11).